The primary structure comprises 164 residues: Transcription elongation factor GreA (164 aa).

The protein belongs to the GreA/GreB family.

Its function is as follows. Necessary for efficient RNA polymerase transcription elongation past template-encoded arresting sites. The arresting sites in DNA have the property of trapping a certain fraction of elongating RNA polymerases that pass through, resulting in locked ternary complexes. Cleavage of the nascent transcript by cleavage factors such as GreA or GreB allows the resumption of elongation from the new 3'terminus. GreA releases sequences of 2 to 3 nucleotides. The polypeptide is Transcription elongation factor GreA (Helicobacter pylori (strain P12)).